We begin with the raw amino-acid sequence, 239 residues long: Large ribosomal subunit protein uL1 (239 aa).

It belongs to the universal ribosomal protein uL1 family. In terms of assembly, part of the 50S ribosomal subunit.

In terms of biological role, binds directly to 23S rRNA. The L1 stalk is quite mobile in the ribosome, and is involved in E site tRNA release. Its function is as follows. Protein L1 is also a translational repressor protein, it controls the translation of the L11 operon by binding to its mRNA. The protein is Large ribosomal subunit protein uL1 of Rickettsia bellii (strain OSU 85-389).